Here is a 466-residue protein sequence, read N- to C-terminus: L-seryl-tRNA(Sec) selenium transferase (466 aa).

Residue Lys293 is modified to N6-(pyridoxal phosphate)lysine.

This sequence belongs to the SelA family. Requires pyridoxal 5'-phosphate as cofactor.

It is found in the cytoplasm. The catalysed reaction is L-seryl-tRNA(Sec) + selenophosphate + H(+) = L-selenocysteinyl-tRNA(Sec) + phosphate. It functions in the pathway aminoacyl-tRNA biosynthesis; selenocysteinyl-tRNA(Sec) biosynthesis; selenocysteinyl-tRNA(Sec) from L-seryl-tRNA(Sec) (bacterial route): step 1/1. Functionally, converts seryl-tRNA(Sec) to selenocysteinyl-tRNA(Sec) required for selenoprotein biosynthesis. The chain is L-seryl-tRNA(Sec) selenium transferase from Desulfotalea psychrophila (strain LSv54 / DSM 12343).